Consider the following 303-residue polypeptide: Acetylglutamate kinase (303 aa).

Substrate contacts are provided by residues 76–77 (GG), Arg-98, and Asn-199.

The protein belongs to the acetylglutamate kinase family. ArgB subfamily.

The protein resides in the cytoplasm. The enzyme catalyses N-acetyl-L-glutamate + ATP = N-acetyl-L-glutamyl 5-phosphate + ADP. The protein operates within amino-acid biosynthesis; L-arginine biosynthesis; N(2)-acetyl-L-ornithine from L-glutamate: step 2/4. In terms of biological role, catalyzes the ATP-dependent phosphorylation of N-acetyl-L-glutamate. The polypeptide is Acetylglutamate kinase (Clavibacter sepedonicus (Clavibacter michiganensis subsp. sepedonicus)).